The sequence spans 238 residues: Fatty acid metabolism regulator protein (238 aa).

One can recognise an HTH gntR-type domain in the interval 6–74 (QSPAGFAEEY…HGKPTKVNNF (69 aa)). Residues 34-53 (ERELSELIGVTRTTLREVLQ) constitute a DNA-binding region (H-T-H motif).

In terms of assembly, homodimer.

The protein localises to the cytoplasm. Multifunctional regulator of fatty acid metabolism. The polypeptide is Fatty acid metabolism regulator protein (Erwinia tasmaniensis (strain DSM 17950 / CFBP 7177 / CIP 109463 / NCPPB 4357 / Et1/99)).